Consider the following 638-residue polypeptide: Dihydrolipoyllysine-residue acetyltransferase component of pyruvate dehydrogenase complex (638 aa).

Lipoyl-binding domains follow at residues 2-74 (SEII…IELE) and 117-191 (SQEV…LTLR). N6-lipoyllysine is present on Lys-40. A compositionally biased stretch (low complexity) spans 90–117 (PAAPTQAVDEAEAPSPGASATPAPAAAS). A disordered region spans residues 90 to 119 (PAAPTQAVDEAEAPSPGASATPAPAAASQE). Position 157 is an N6-lipoyllysine (Lys-157). A disordered region spans residues 201–220 (APAAAAAASPAPAPLAPAAA). A Lipoyl-binding 3 domain is found at 222–296 (PQEVKVPDIG…GTGDQILTLR (75 aa)). Lys-262 carries the post-translational modification N6-lipoyllysine. Residues 301–320 (APSGPRARGSPGQAAAAPGA) are compositionally biased toward low complexity. Residues 301–336 (APSGPRARGSPGQAAAAPGAAPAPAPVGAPSRNGAK) form a disordered region. Residues 338 to 375 (HAGPAVRQLAREFGVELAAINSTGPRGRILKEDVQAYV) enclose the Peripheral subunit-binding (PSBD) domain. Residues 382-638 (AKEAPAAGAA…LLADIRAILL (257 aa)) form a catalytic region. His-611 is a catalytic residue.

It belongs to the 2-oxoacid dehydrogenase family. Forms a 24-polypeptide structural core with octahedral symmetry. Requires (R)-lipoate as cofactor.

The enzyme catalyses N(6)-[(R)-dihydrolipoyl]-L-lysyl-[protein] + acetyl-CoA = N(6)-[(R)-S(8)-acetyldihydrolipoyl]-L-lysyl-[protein] + CoA. Functionally, the pyruvate dehydrogenase complex catalyzes the overall conversion of pyruvate to acetyl-CoA and CO(2). It contains multiple copies of three enzymatic components: pyruvate dehydrogenase (E1), dihydrolipoamide acetyltransferase (E2) and lipoamide dehydrogenase (E3). The protein is Dihydrolipoyllysine-residue acetyltransferase component of pyruvate dehydrogenase complex of Azotobacter vinelandii.